A 594-amino-acid chain; its full sequence is Probable translation initiation factor IF-2 (594 aa).

A tr-type G domain is found at 5–224 (YRAPIVVVVG…LMAGLTQRLV (220 aa)). The G1 stretch occupies residues 14–21 (GHVDVGKT). 14–21 (GHVDVGKT) serves as a coordination point for GTP. Residues 39–43 (MITQH) are G2. A G3 region spans residues 80-83 (DTPG). GTP is bound by residues 80 to 84 (DTPGH) and 134 to 137 (NKVD). A G4 region spans residues 134 to 137 (NKVD). A G5 region spans residues 202–204 (SAV).

This sequence belongs to the TRAFAC class translation factor GTPase superfamily. Classic translation factor GTPase family. IF-2 subfamily.

Functionally, function in general translation initiation by promoting the binding of the formylmethionine-tRNA to ribosomes. Seems to function along with eIF-2. This Caldivirga maquilingensis (strain ATCC 700844 / DSM 13496 / JCM 10307 / IC-167) protein is Probable translation initiation factor IF-2.